The chain runs to 206 residues: RILP-like protein 2 (206 aa).

Positions 1–29 are disordered; the sequence is MEEPPLREEEEEEEEDEAGPEGALGKSPL. Positions 8-19 are enriched in acidic residues; the sequence is EEEEEEEEDEAG. Residues 19–108 enclose the RH1 domain; it reads GPEGALGKSP…RREGSAAGPE (90 aa). A coiled-coil region spans residues 67–159; sequence LEMLETLVNE…VQEELQCYKS (93 aa). The RH2 domain maps to 125-197; sequence RPRFTLQELR…KEEKTIIRKL (73 aa). The disordered stretch occupies residues 161 to 189; that stretch reads LIPPREGPGGRREKEALFPRGSNANSNKE. Basic and acidic residues predominate over residues 168-177; the sequence is PGGRREKEAL.

This sequence belongs to the RILPL family. Homodimer. Interacts with RAC1. Interacts (via N-terminus) with MYO5A, the interaction is required for its role in dendrite formation. Interacts with RAB8A; interaction is dependent on the phosphorylation of RAB8A on 'Thr-72'. Interacts with RAB10 and RAB12; interaction is dependent on the phosphorylation of 'Thr-73' on RAB10 and 'Ser-105' on RAB12.

The protein resides in the cytoplasm. It is found in the cytosol. Its subcellular location is the cytoskeleton. The protein localises to the microtubule organizing center. It localises to the centrosome. The protein resides in the cell projection. It is found in the cilium. Its function is as follows. Involved in cell shape and neuronal morphogenesis, positively regulating the establishment and maintenance of dendritic spines. Plays a role in cellular protein transport, including protein transport away from primary cilia. May function via activation of RAC1 and PAK1. This chain is RILP-like protein 2 (RILPL2), found in Bos taurus (Bovine).